The sequence spans 79 residues: Sulfur carrier protein TusA (79 aa).

Catalysis depends on Cys-17, which acts as the Cysteine persulfide intermediate.

This sequence belongs to the sulfur carrier protein TusA family.

It is found in the cytoplasm. In terms of biological role, sulfur carrier protein which probably makes part of a sulfur-relay system. This is Sulfur carrier protein TusA from Actinobacillus pleuropneumoniae serotype 5b (strain L20).